Reading from the N-terminus, the 347-residue chain is Tetraacyldisaccharide 4'-kinase (347 aa).

ATP is bound at residue 64–71 (YVGGTGKT).

The protein belongs to the LpxK family.

The catalysed reaction is a lipid A disaccharide + ATP = a lipid IVA + ADP + H(+). The protein operates within glycolipid biosynthesis; lipid IV(A) biosynthesis; lipid IV(A) from (3R)-3-hydroxytetradecanoyl-[acyl-carrier-protein] and UDP-N-acetyl-alpha-D-glucosamine: step 6/6. In terms of biological role, transfers the gamma-phosphate of ATP to the 4'-position of a tetraacyldisaccharide 1-phosphate intermediate (termed DS-1-P) to form tetraacyldisaccharide 1,4'-bis-phosphate (lipid IVA). This is Tetraacyldisaccharide 4'-kinase from Bordetella bronchiseptica (strain ATCC BAA-588 / NCTC 13252 / RB50) (Alcaligenes bronchisepticus).